We begin with the raw amino-acid sequence, 278 residues long: Fe(II)/2-oxoglutarate-dependent dioxygenase nvfI (278 aa).

The protein belongs to the asaB hydroxylase/desaturase family.

The catalysed reaction is asnovolin A + 2-oxoglutarate + 2 O2 = fumigatonoid A + succinate + CO2. It participates in secondary metabolite biosynthesis; terpenoid biosynthesis. Fe(II)/2-oxoglutarate-dependent dioxygenase; part of the gene cluster that mediates the biosynthesis of novofumigatonin, a heavily oxygenated meroterpenoid containing a unique orthoester moiety. The first step of the pathway is the synthesis of 3,5-dimethylorsellinic acid (DMOA) by the polyketide synthase nvfA via condensation of one acetyl-CoA starter unit with 3 malonyl-CoA units and 2 methylations. DMOA is then converted to farnesyl-DMOA by the farnesyltransferase nvfB. Epoxydation by FAD-dependent monooxygenase nvfK, followed by a protonation-initiated cyclization catalyzed by the terpene cyclase nvfL leads to the production of asnavolin H. The short chain dehydrogenase nvfC then as a 3-OH dehydrogenase of asnovolin H to yield chemesin D. There are two branches to synthesize asnovolin A from chemesin D. In one branch, chemesin D undergoes Baeyer-Villiger oxidation by nvfH, methylation by nvfJ, and enoyl reduction by the nvfM D enoylreductase that reduces the double bond between C-5'and C-6', to form respectively asnovolin I, asnovolin K, and asnovolin A. In the other branch, the methylation precedes the Baeyer-Villiger oxidation and the enoyl reduction to yield asnovolin A via the asnovolin J intermediate. Asnovolin A is further converted to fumigatonoid A by the Fe(II)/2-oxoglutarate-dependent dioxygenase nvfI that catalyzes an endoperoxidation reaction. The alpha/beta hydrolase nvfD then acts as an epimerase that converts fumigatonoid A to its C-5' epimer, which then undergoes spontaneous or nvfD-catalyzed lactonization. The following step utilizes the ketoreductase nvfG to produce fumigatonoid B. The dioxygenase nvfE further converts fumigatonoid B into fumigatonoid C. Finally the Fe(II)/2-oxoglutarate-dependent dioxygenase nvfF catalyzes two rounds of oxidation to transform fumigatonoid C into the end product, novofumigatonin A. The chain is Fe(II)/2-oxoglutarate-dependent dioxygenase nvfI from Aspergillus novofumigatus (strain IBT 16806).